The chain runs to 383 residues: Na(+)/H(+) antiporter NhaA (383 aa).

11 helical membrane-spanning segments follow: residues 21 to 41 (AAGVMLMAASAIGMVFANSIW), 56 to 76 (LTMRGWINDALMALFFLLAGL), 94 to 114 (LLPGVAAIGGMVVPAIIYVAF), 123 to 143 (GWAIPTATDIAFALGVLALAG), 152 to 172 (VFLTALAIVDDLGAVIVIALF), 175 to 195 (GTLSVLPGAGVAAILGLLLML), 202 to 222 (TLFPYLLAGVPLWWLTLKSGI), 258 to 278 (FVILPLFGFANAGISLHGVTV), 287 to 307 (LGVGAALMLGKPLGVLGAVSI), 326 to 346 (IGIAFLCGIGFTMSLFIAILA), and 355 to 375 (QIKLGILSGSMLSGLCGYILL).

The protein belongs to the NhaA Na(+)/H(+) (TC 2.A.33) antiporter family.

The protein resides in the cell inner membrane. The enzyme catalyses Na(+)(in) + 2 H(+)(out) = Na(+)(out) + 2 H(+)(in). Its function is as follows. Na(+)/H(+) antiporter that extrudes sodium in exchange for external protons. This Granulibacter bethesdensis (strain ATCC BAA-1260 / CGDNIH1) protein is Na(+)/H(+) antiporter NhaA.